Here is a 706-residue protein sequence, read N- to C-terminus: Ribosomal RNA large subunit methyltransferase K/L (706 aa).

Positions 43–154 constitute a THUMP domain; sequence LMYQSLLWSR…RDMASVALDL (112 aa).

Belongs to the methyltransferase superfamily. RlmKL family.

Its subcellular location is the cytoplasm. It carries out the reaction guanosine(2445) in 23S rRNA + S-adenosyl-L-methionine = N(2)-methylguanosine(2445) in 23S rRNA + S-adenosyl-L-homocysteine + H(+). It catalyses the reaction guanosine(2069) in 23S rRNA + S-adenosyl-L-methionine = N(2)-methylguanosine(2069) in 23S rRNA + S-adenosyl-L-homocysteine + H(+). Specifically methylates the guanine in position 2445 (m2G2445) and the guanine in position 2069 (m7G2069) of 23S rRNA. This chain is Ribosomal RNA large subunit methyltransferase K/L, found in Yersinia pestis (strain Pestoides F).